An 876-amino-acid chain; its full sequence is Leucine--tRNA ligase (876 aa).

Residues Pro42–His52 carry the 'HIGH' region motif. Residues Lys634–Ser638 carry the 'KMSKS' region motif. ATP is bound at residue Lys637.

The protein belongs to the class-I aminoacyl-tRNA synthetase family.

Its subcellular location is the cytoplasm. The catalysed reaction is tRNA(Leu) + L-leucine + ATP = L-leucyl-tRNA(Leu) + AMP + diphosphate. This Neisseria meningitidis serogroup C (strain 053442) protein is Leucine--tRNA ligase.